Consider the following 224-residue polypeptide: UPF0758 protein Tola_0183 (224 aa).

One can recognise an MPN domain in the interval 102–224 (SLTSPQLVRR…PVSFAERGWL (123 aa)). Positions 173, 175, and 186 each coordinate Zn(2+). The JAMM motif motif lies at 173-186 (HNHPSGVAEPSHAD).

The protein belongs to the UPF0758 family.

This is UPF0758 protein Tola_0183 from Tolumonas auensis (strain DSM 9187 / NBRC 110442 / TA 4).